A 166-amino-acid chain; its full sequence is Phosphopantetheine adenylyltransferase (166 aa).

A substrate-binding site is contributed by serine 11. ATP is bound by residues serine 11–phenylalanine 12 and histidine 19. Substrate is bound by residues lysine 43, leucine 75, and arginine 89. ATP contacts are provided by residues glycine 90–arginine 92, glutamate 100, and tyrosine 125–serine 131.

It belongs to the bacterial CoaD family. In terms of assembly, homohexamer. It depends on Mg(2+) as a cofactor.

Its subcellular location is the cytoplasm. It catalyses the reaction (R)-4'-phosphopantetheine + ATP + H(+) = 3'-dephospho-CoA + diphosphate. It functions in the pathway cofactor biosynthesis; coenzyme A biosynthesis; CoA from (R)-pantothenate: step 4/5. Reversibly transfers an adenylyl group from ATP to 4'-phosphopantetheine, yielding dephospho-CoA (dPCoA) and pyrophosphate. In Syntrophotalea carbinolica (strain DSM 2380 / NBRC 103641 / GraBd1) (Pelobacter carbinolicus), this protein is Phosphopantetheine adenylyltransferase.